An 875-amino-acid chain; its full sequence is MSRHHSRFERDYRIGWDRREWSVNGTHGATSVCSVTSGAGGSTASSLSARPGLLPLPVVPSRLPTPATAPAPCTTGSSEAITSLVVSSASAATTKAPGISKADNQSQGLTTSIRWGQTPVNQSTPWDTDEPPSKQMRESDNPGTGPWVTTVAAGNQPSLITHSYGVTQPPTFSPAVNVQAPVIGVTPSLPPHVGPQLPLIPGHYSLPQPPSQPLSSVVVNMPAQALYASPQPLAVSTLPGVGQVSRPGPTPVGNGHMAGPLLPPPPPAQPSAALPSSVPATNGPPTTDSAHGLQMLRTIGVGKYEFTDPGHPKEMLKELNQQRRAKAFTDLKIVVEGREFEVHQNVLASCSLYFKDLIQRSVQDSSQSSREKLELVLSNLQADVLELLLEFVYTGSLVIDSANAKTLLEAASKFQFHTFCKVCVSFLEKQLTASNCLGVLAMAEAMQCSELYHMAKAFALQIFPEVAAQEEILSISKDDFIAYVSNDSLNTKAEELVYETVIKWIKKDPATRAQYAAELLAAVRLPFIHPSYLLNVVDNEELIKSSEACRDLVNEAKRYHMLPHARQEMQTPRTRPRLSAGVAEVIVLVGGRQMVGMTQRSLVAVTCWNPQNNKWYPLASLPFYDREFFSVVSAGDNIYLSGGMESGVTLADVWCYMSLLDNWNLVSRMTVPRCRHNSLVYDGKIYTLGGLGVAGNVDHVERYDTITNQWEAVAPLPKAVHSAAATVCGGKIYVFGGVNEAGRAAGVLQSYVPQTNTWSFIESPMIDNKYAPAVTLNGFVFILGGAYARATTIYDPEKGNIKAGPNMNHSRQFCSAVVLDGKIYATGGIVSSEGPALGNMEAYEPTTNTWTLLPHMPCPVFRHGCVVIKKYIQSG.

Over residues 113–126 (IRWGQTPVNQSTPW) the composition is skewed to polar residues. Disordered regions lie at residues 113 to 145 (IRWGQTPVNQSTPWDTDEPPSKQMRESDNPGTG) and 240 to 291 (GVGQ…DSAH). Residues 131 to 140 (PPSKQMRESD) show a composition bias toward basic and acidic residues. Residues 270 to 280 (PSAALPSSVPA) are compositionally biased toward low complexity. Residues 329 to 401 (TDLKIVVEGR…VYTGSLVIDS (73 aa)) enclose the BTB domain. Kelch repeat units follow at residues 585–635 (VIVL…VSAG), 637–683 (NIYL…VYDG), 684–730 (KIYT…VCGG), 732–778 (IYVF…TLNG), 779–821 (FVFI…VLDG), and 822–870 (KIYA…VIKK).

The sequence is that of Kelch-like protein 29 (Klhl29) from Mus musculus (Mouse).